Here is a 187-residue protein sequence, read N- to C-terminus: Ribosome maturation factor RimM (187 aa).

The PRC barrel domain maps to 91 to 183 (DDGFYDHELE…ILVLTPPEGL (93 aa)).

It belongs to the RimM family. As to quaternary structure, binds ribosomal protein uS19.

It is found in the cytoplasm. In terms of biological role, an accessory protein needed during the final step in the assembly of 30S ribosomal subunit, possibly for assembly of the head region. Essential for efficient processing of 16S rRNA. May be needed both before and after RbfA during the maturation of 16S rRNA. It has affinity for free ribosomal 30S subunits but not for 70S ribosomes. In Corynebacterium jeikeium (strain K411), this protein is Ribosome maturation factor RimM.